A 394-amino-acid chain; its full sequence is Obg-like ATPase 1 (394 aa).

Residues 25–282 (LKIGIVGLPN…MPPDEAAKYC (258 aa)) form the OBG-type G domain. ATP is bound by residues 34–39 (NVGKST), 56–60 (FCTID), and 94–97 (DIAG). Positions 38 and 58 each coordinate Mg(2+). Phe-129 is a binding site for GTP. ATP is bound by residues 230–231 (NM), Met-231, and 263–265 (SCA). 263-265 (SCA) contacts GTP. One can recognise a TGS domain in the interval 303–386 (HLIYFFTAGP…QDADIIFFKF (84 aa)).

This sequence belongs to the TRAFAC class OBG-HflX-like GTPase superfamily. OBG GTPase family. YchF/OLA1 subfamily. As to quaternary structure, monomer (Potential). Interacts with GAP1. Mg(2+) is required as a cofactor.

The protein resides in the cytoplasm. It is found in the cell membrane. Its subcellular location is the cytosol. Activated by GAP1. Hydrolyzes ATP, and can also hydrolyze GTP with lower efficiency. Has lower affinity for GTP (Potential). Exhibits GTPase activity. Exhibits similar binding affinities and hydrolytic activities toward both GTP and ATP. Binds to the 26 S ribosomal RNA in vitro, but not to the 5.8 S or 18 S rRNA. Confers sensitivity to salinity stress by suppressing the anti-oxidation enzymatic activities and increasing lipid peroxidation thus leading to the accumulation of reactive oxygen species (ROS). This chain is Obg-like ATPase 1, found in Oryza sativa subsp. indica (Rice).